Reading from the N-terminus, the 328-residue chain is Phosphate acyltransferase (328 aa).

This sequence belongs to the PlsX family. In terms of assembly, homodimer. Probably interacts with PlsY.

The protein localises to the cytoplasm. It carries out the reaction a fatty acyl-[ACP] + phosphate = an acyl phosphate + holo-[ACP]. It functions in the pathway lipid metabolism; phospholipid metabolism. Its function is as follows. Catalyzes the reversible formation of acyl-phosphate (acyl-PO(4)) from acyl-[acyl-carrier-protein] (acyl-ACP). This enzyme utilizes acyl-ACP as fatty acyl donor, but not acyl-CoA. In Staphylococcus haemolyticus (strain JCSC1435), this protein is Phosphate acyltransferase.